Reading from the N-terminus, the 306-residue chain is MAIKHFLQFKDFTREELEYVFERTSWIKNQFKSYQKYWPLSDRTLVMIFEKASTRTRLSFEAGMQQLGGSAIYLNTRDSQLGRGEPVEDAAQVISRMSDIVMIRTFEQEIIERFAANSRVPVINGLTNEYHPCQILADIYTYIEHRGCIQGKTVAWVGDANNMCNTWLQAAEVLDFKVHVSTPPAYEIQPELVGKINPARFKVFADPMDACRGADLVTTDVWTSMGFEAENEERIKAFADWCVDGDMMRVANPQAVFMHCLPAHRGEEVTAEVIDGPQSVVWDEAENRLHVQKALMEYLMLGRIQG.

Residues 53 to 56 (STRT), Gln80, Arg104, and 131 to 134 (HPCQ) each bind carbamoyl phosphate. Residues Asn162, Asp220, and 224–225 (SM) each bind L-ornithine. Carbamoyl phosphate contacts are provided by residues 260-261 (CL) and Arg288.

It belongs to the aspartate/ornithine carbamoyltransferase superfamily. OTCase family.

It is found in the cytoplasm. It catalyses the reaction carbamoyl phosphate + L-ornithine = L-citrulline + phosphate + H(+). It participates in amino-acid biosynthesis; L-arginine biosynthesis; L-arginine from L-ornithine and carbamoyl phosphate: step 1/3. Its function is as follows. Reversibly catalyzes the transfer of the carbamoyl group from carbamoyl phosphate (CP) to the N(epsilon) atom of ornithine (ORN) to produce L-citrulline. This chain is Ornithine carbamoyltransferase, found in Dechloromonas aromatica (strain RCB).